We begin with the raw amino-acid sequence, 304 residues long: Uricase (304 aa).

Position 2 is an N-acetylalanine (Ala-2). An N6-acetyllysine; alternate mark is found at Lys-10 and Lys-23. 2 positions are modified to N6-succinyllysine; alternate: Lys-10 and Lys-23. Catalysis depends on Lys-23, which acts as the Charge relay system. Residues Lys-27 and Lys-36 each carry the N6-acetyllysine modification. Residues Ser-39 and Ser-63 each carry the phosphoserine modification. Thr-68 (charge relay system) is an active-site residue. Residues Thr-68 and Asp-69 each contribute to the urate site. An N6-acetyllysine mark is found at Lys-118, Lys-122, and Lys-164. Urate is bound at residue Phe-170. N6-acetyllysine is present on residues Lys-175 and Lys-185. Arg-187 lines the urate pocket. Lys-221 and Lys-228 each carry N6-acetyllysine; alternate. Residues Lys-221 and Lys-228 each carry the N6-succinyllysine; alternate modification. Phosphoserine is present on Ser-232. Residues Val-235, Gln-236, and Asn-262 each coordinate urate. His-264 serves as the catalytic Charge relay system. Position 278 is an N6-acetyllysine (Lys-278). Residue Tyr-289 is modified to Phosphotyrosine. Residues 302 to 304 (SKL) carry the Microbody targeting signal motif.

It belongs to the uricase family.

It localises to the peroxisome. The enzyme catalyses urate + O2 + H2O = 5-hydroxyisourate + H2O2. It participates in purine metabolism; urate degradation; (S)-allantoin from urate: step 1/3. Catalyzes the oxidation of uric acid to 5-hydroxyisourate, which is further processed to form (S)-allantoin. The sequence is that of Uricase (UOX) from Canis lupus familiaris (Dog).